We begin with the raw amino-acid sequence, 145 residues long: Putative antiporter subunit mnhG2 (145 aa).

Helical transmembrane passes span 11 to 31 (IAAV…IGIV), 51 to 71 (VLLT…FFSV), and 72 to 92 (RLLL…HLVA).

Belongs to the CPA3 antiporters (TC 2.A.63) subunit G family. May form a heterooligomeric complex that consists of seven subunits: mnhA2, mnhB2, mnhC2, mnhD2, mnhE2, mnhF2 and mnhG2.

It localises to the cell membrane. In Staphylococcus aureus (strain bovine RF122 / ET3-1), this protein is Putative antiporter subunit mnhG2 (mnhG2).